Consider the following 283-residue polypeptide: Apidaecins type 73 (283 aa).

The first 18 residues, 1–18 (KNFALAILVVTFVVAVFG), serve as a signal peptide directing secretion. 9 propeptides span residues 19-41 (NTNL…EAEP), 62-69 (EAEPEAEP), 90-97 (EAELEAEP), 118-125 (EAEPEAEP), 146-153 (EAELEAEP), 174-181 (EAEPEAEP), 202-209 (EAEPEAEP), 230-237 (EAEPEAEP), and 258-265 (EAKPEAKP). The segment at 19-283 (NTNLDPPTRP…PQPRPPHPRI (265 aa)) is disordered. Over residues 273-283 (IPQPRPPHPRI) the composition is skewed to pro residues.

It belongs to the apidaecin family.

The protein localises to the secreted. Its function is as follows. Apidaecins have bactericidal activity; predominantly against Gram-negative bacteria. They seem to interfere with cell propagation. The chain is Apidaecins type 73 (APID73) from Apis mellifera (Honeybee).